Reading from the N-terminus, the 239-residue chain is MNEDIKNNLNNLDEFSGKIIVGLDEAGRGPVIGPMVIASVKINEKDLYKLQDLGLKDSKQLSKKKREELYVKISEICNVKKIVIAPEKIDEQMEITNLNKIELSAFSKLANHFIKENENISIYIDACSSNEQSFSNQFKAKLINKNVEIIAEHKADENYKIVSAASIIAKVTRDNVIEEYKKTFGEIGSGYPSDPKTKKFLKKYVHENKGLPKIARKSWATSKNLLKEIEESKIFQWVK.

The RNase H type-2 domain maps to 18–231 (KIIVGLDEAG…SKNLLKEIEE (214 aa)). Positions 24, 25, and 125 each coordinate a divalent metal cation.

Belongs to the RNase HII family. It depends on Mn(2+) as a cofactor. Requires Mg(2+) as cofactor.

The protein localises to the cytoplasm. The catalysed reaction is Endonucleolytic cleavage to 5'-phosphomonoester.. Functionally, endonuclease that specifically degrades the RNA of RNA-DNA hybrids. This chain is Ribonuclease HII, found in Methanococcus maripaludis (strain C6 / ATCC BAA-1332).